The following is a 530-amino-acid chain: Na(+)/H(+) antiporter NhaB (530 aa).

11 helical membrane passes run 23 to 43 (VAII…NPFL), 45 to 65 (GWLL…CYPL), 90 to 110 (LVAN…IYFM), 113 to 133 (LLLF…LLSI), 140 to 160 (AFLS…SVAV), 205 to 225 (LLMH…VGEP), 238 to 258 (FGEF…AGML), 308 to 328 (IAVW…LIGL), 351 to 371 (EEAL…AVII), 451 to 471 (ATPN…APLI), and 479 to 499 (VIMA…GIMF).

It belongs to the NhaB Na(+)/H(+) (TC 2.A.34) antiporter family.

It is found in the cell inner membrane. It catalyses the reaction 2 Na(+)(in) + 3 H(+)(out) = 2 Na(+)(out) + 3 H(+)(in). Na(+)/H(+) antiporter that extrudes sodium in exchange for external protons. The protein is Na(+)/H(+) antiporter NhaB of Vibrio cholerae serotype O1 (strain ATCC 39541 / Classical Ogawa 395 / O395).